A 209-amino-acid polypeptide reads, in one-letter code: Small ribosomal subunit protein uS4 (209 aa).

The 62-residue stretch at 99–160 folds into the S4 RNA-binding domain; it reads RRLDNVVYRL…GSKEMTLLGQ (62 aa).

The protein belongs to the universal ribosomal protein uS4 family. In terms of assembly, part of the 30S ribosomal subunit. Contacts protein S5. The interaction surface between S4 and S5 is involved in control of translational fidelity.

One of the primary rRNA binding proteins, it binds directly to 16S rRNA where it nucleates assembly of the body of the 30S subunit. Functionally, with S5 and S12 plays an important role in translational accuracy. The protein is Small ribosomal subunit protein uS4 of Koribacter versatilis (strain Ellin345).